The chain runs to 816 residues: Sucrose synthase 1 (816 aa).

Residues 280-757 form a GT-B glycosyltransferase region; sequence MVFNVVIMSP…GLQRIEEKYT (478 aa).

This sequence belongs to the glycosyltransferase 1 family. Plant sucrose synthase subfamily. As to quaternary structure, homotetramer or heterotetramer with SUS2. Expressed in root phloem and leaf mesophyll. Expressed in phloem tissues and aleurone layers of seeds and at lower levels in the pericarp and endosperm cells (at protein level). Predominantly expressed in elongating tissues including roots, developing leaves and internodes.

It carries out the reaction an NDP-alpha-D-glucose + D-fructose = a ribonucleoside 5'-diphosphate + sucrose + H(+). In terms of biological role, sucrose-cleaving enzyme that provides UDP-glucose and fructose for various metabolic pathways. This chain is Sucrose synthase 1 (SUS1), found in Oryza sativa subsp. japonica (Rice).